Here is a 203-residue protein sequence, read N- to C-terminus: FMN-dependent NADH:quinone oxidoreductase (203 aa).

143–146 (SNGG) is an FMN binding site.

Belongs to the azoreductase type 1 family. Homodimer. The cofactor is FMN.

The enzyme catalyses 2 a quinone + NADH + H(+) = 2 a 1,4-benzosemiquinone + NAD(+). It carries out the reaction N,N-dimethyl-1,4-phenylenediamine + anthranilate + 2 NAD(+) = 2-(4-dimethylaminophenyl)diazenylbenzoate + 2 NADH + 2 H(+). Its function is as follows. Quinone reductase that provides resistance to thiol-specific stress caused by electrophilic quinones. Functionally, also exhibits azoreductase activity. Catalyzes the reductive cleavage of the azo bond in aromatic azo compounds to the corresponding amines. In Streptococcus suis (strain 98HAH33), this protein is FMN-dependent NADH:quinone oxidoreductase.